We begin with the raw amino-acid sequence, 62 residues long: Large ribosomal subunit protein bL28 (62 aa).

Belongs to the bacterial ribosomal protein bL28 family.

In Caldicellulosiruptor bescii (strain ATCC BAA-1888 / DSM 6725 / KCTC 15123 / Z-1320) (Anaerocellum thermophilum), this protein is Large ribosomal subunit protein bL28.